We begin with the raw amino-acid sequence, 545 residues long: CTP synthase (545 aa).

The segment at 1–267 (MTKFIFVTGG…AEQTLKLLQM (267 aa)) is amidoligase domain. S13 is a binding site for CTP. UTP is bound at residue S13. ATP-binding positions include 14–19 (SIGKGI) and D71. D71 and E141 together coordinate Mg(2+). CTP contacts are provided by residues 148 to 150 (DIE), 188 to 193 (KTKPTQ), and K224. UTP-binding positions include 188–193 (KTKPTQ) and K224. The region spanning 292–534 (EIAIVGKYVS…VQAAIAQSHP (243 aa)) is the Glutamine amidotransferase type-1 domain. G354 lines the L-glutamine pocket. The Nucleophile; for glutamine hydrolysis role is filled by C381. Residues 382-385 (LGMQ), E405, and R462 contribute to the L-glutamine site. Catalysis depends on residues H507 and E509.

It belongs to the CTP synthase family. As to quaternary structure, homotetramer.

It carries out the reaction UTP + L-glutamine + ATP + H2O = CTP + L-glutamate + ADP + phosphate + 2 H(+). The catalysed reaction is L-glutamine + H2O = L-glutamate + NH4(+). The enzyme catalyses UTP + NH4(+) + ATP = CTP + ADP + phosphate + 2 H(+). Its pathway is pyrimidine metabolism; CTP biosynthesis via de novo pathway; CTP from UDP: step 2/2. With respect to regulation, allosterically activated by GTP, when glutamine is the substrate; GTP has no effect on the reaction when ammonia is the substrate. The allosteric effector GTP functions by stabilizing the protein conformation that binds the tetrahedral intermediate(s) formed during glutamine hydrolysis. Inhibited by the product CTP, via allosteric rather than competitive inhibition. Functionally, catalyzes the ATP-dependent amination of UTP to CTP with either L-glutamine or ammonia as the source of nitrogen. Regulates intracellular CTP levels through interactions with the four ribonucleotide triphosphates. The sequence is that of CTP synthase from Trichormus variabilis (strain ATCC 29413 / PCC 7937) (Anabaena variabilis).